Reading from the N-terminus, the 709-residue chain is Molybdenum cofactor sulfurase (709 aa).

Position 208 is an N6-(pyridoxal phosphate)lysine (Lys-208). The active site involves Cys-367. Residues 563 to 707 enclose the MOSC domain; it reads DNALDRQNCR…LESGMSVNFS (145 aa).

This sequence belongs to the class-V pyridoxal-phosphate-dependent aminotransferase family. MOCOS subfamily. Pyridoxal 5'-phosphate serves as cofactor.

It catalyses the reaction Mo-molybdopterin + L-cysteine + AH2 = thio-Mo-molybdopterin + L-alanine + A + H2O. Its pathway is cofactor biosynthesis; molybdopterin biosynthesis. Functionally, sulfurates the molybdenum cofactor. Sulfation of molybdenum is essential for xanthine dehydrogenase (XDH) and aldehyde oxidase (ADO) enzymes in which molybdenum cofactor is liganded by 1 oxygen and 1 sulfur atom in active form. This is Molybdenum cofactor sulfurase from Caenorhabditis elegans.